The following is a 569-amino-acid chain: Putative ABC transporter ATP-binding protein TTE1589 (569 aa).

ABC transporter domains lie at 8–248 (IIVK…IGLM) and 309–542 (IQAK…LSLK). ATP is bound by residues 43–50 (GPSGAGKS) and 342–349 (GHNGSGKT).

Belongs to the ABC transporter superfamily.

Its subcellular location is the cell membrane. Functionally, probably part of an ABC transporter complex. Responsible for energy coupling to the transport system. The sequence is that of Putative ABC transporter ATP-binding protein TTE1589 from Caldanaerobacter subterraneus subsp. tengcongensis (strain DSM 15242 / JCM 11007 / NBRC 100824 / MB4) (Thermoanaerobacter tengcongensis).